Reading from the N-terminus, the 151-residue chain is Small ribosomal subunit protein uS19 (151 aa).

A disordered region spans residues 1–23; the sequence is MVVNKQGSVKSIKRKARKSRKVT. Positions 11-23 are enriched in basic residues; that stretch reads SIKRKARKSRKVT.

The protein belongs to the universal ribosomal protein uS19 family.

Its function is as follows. Protein S19 forms a complex with S13 that binds strongly to the 16S ribosomal RNA. In Thermoplasma volcanium (strain ATCC 51530 / DSM 4299 / JCM 9571 / NBRC 15438 / GSS1), this protein is Small ribosomal subunit protein uS19 (rps19).